We begin with the raw amino-acid sequence, 195 residues long: Imidazoleglycerol-phosphate dehydratase (195 aa).

This sequence belongs to the imidazoleglycerol-phosphate dehydratase family.

It localises to the cytoplasm. The enzyme catalyses D-erythro-1-(imidazol-4-yl)glycerol 3-phosphate = 3-(imidazol-4-yl)-2-oxopropyl phosphate + H2O. It participates in amino-acid biosynthesis; L-histidine biosynthesis; L-histidine from 5-phospho-alpha-D-ribose 1-diphosphate: step 6/9. The sequence is that of Imidazoleglycerol-phosphate dehydratase from Thermotoga maritima (strain ATCC 43589 / DSM 3109 / JCM 10099 / NBRC 100826 / MSB8).